We begin with the raw amino-acid sequence, 472 residues long: MNAVTDLKQDYLVADINLAGWGRKEIAIAETEMPGLMAIRDEFAAAQPLKGARIAGSLHMTIQTAVLIETLKALGADVRWASCNIFSTQDHAAAAIAAGGTPVFAFKGESLKEYWDFTHRIFDWADGGTPNMILDDGGDATLLLHLGARAEKDQSVIAKATSEEETYLFAAIKEKLAKDPSWYSRNLAAIRGVTEETTTGVHRLYQMAQKGELRFPAINVNDSVTKSKFDNLYGCRESLVDGIKRATDVMIAGKVAIVAGYGDVGKGSAQALRALSAQVWVTEIDPICALQAAMEGYRVVTMDYAAEHGDIFVTCTGNYHVITHDHMAKMKDQAIVCNIGHFDNEIDIASIEKYEWDEIKPQVDHVKFPDGKKLIILAKGRLVNLGCATGHPSYVMSSSFANQTIAQIELWQERDSGKYPVGVYTLPKHLDEKVARLQLRKLNAQLTELTEQQAAYIGVKKEGPYKADHYRY.

Residues Thr-61, Asp-136, and Glu-196 each coordinate substrate. 197 to 199 (TTT) contacts NAD(+). Substrate-binding residues include Lys-226 and Asp-230. NAD(+) contacts are provided by residues Asn-231, 260 to 265 (GYGDVG), Glu-283, Asn-318, 339 to 341 (IGH), and Asn-384.

This sequence belongs to the adenosylhomocysteinase family. It depends on NAD(+) as a cofactor.

It is found in the cytoplasm. It catalyses the reaction S-adenosyl-L-homocysteine + H2O = L-homocysteine + adenosine. The protein operates within amino-acid biosynthesis; L-homocysteine biosynthesis; L-homocysteine from S-adenosyl-L-homocysteine: step 1/1. In terms of biological role, may play a key role in the regulation of the intracellular concentration of adenosylhomocysteine. The sequence is that of Adenosylhomocysteinase from Cupriavidus necator (strain ATCC 17699 / DSM 428 / KCTC 22496 / NCIMB 10442 / H16 / Stanier 337) (Ralstonia eutropha).